The chain runs to 803 residues: 3',5'-cyclic-AMP phosphodiesterase 4D (803 aa).

Residues 1–103 form a disordered region; sequence MEAEGSSVPA…SGASRVRHRG (103 aa). Phosphoserine is present on residues His-52 and His-56. Residues 58–85 are compositionally biased toward pro residues; sequence PPPPPPSPQPQLQPPPPPPLPPPPPPPG. A phosphoserine mark is found at Ser-137, Ser-294, Ser-296, Ser-343, and Ser-370. Positions 338–358 are disordered; that stretch reads EVEIPSPTQKEKEKKKRPMSQ. Positions 381–710 constitute a PDEase domain; that stretch reads VKTEQEDVLA…EWYQSTIPQS (330 aa). Lys-382 participates in a covalent cross-link: Glycyl lysine isopeptide (Lys-Gly) (interchain with G-Cter in SUMO). The active-site Proton donor is His-457. His-457 contacts 3',5'-cyclic AMP. Position 457 (His-457) interacts with AMP. Residues His-461, His-497, Asp-498, and Asp-615 each coordinate Zn(2+). 5 residues coordinate AMP: Asp-498, Asp-615, Asn-618, Gln-666, and Phe-669. A Mg(2+)-binding site is contributed by Asp-498. Asp-498 provides a ligand contact to Mn(2+). Residues Gln-666 and Phe-669 each coordinate 3',5'-cyclic AMP. 2 disordered regions span residues 705 to 724 and 732 to 803; these read STIP…GRQG and ELTL…CPDT. Polar residues predominate over residues 757–768; it reads CSDSKTLCTQDS. A compositionally biased stretch (acidic residues) spans 774–789; sequence PLDEQVEEEAVAEEES.

Belongs to the cyclic nucleotide phosphodiesterase family. PDE4 subfamily. Homodimer for the long isoforms. Isoforms with truncated N-termini are monomeric. Binds ARRB2. Isoform 33 is part of a ternary complex containing PRKAR2A, PRKAR2B and AKAP9. Identified in a complex composed of RYR1, PDE4D, PKA, FKBP1A and protein phosphatase 1 (PP1). Interacts with PDE4DIP. Isoform 5 interacts (via N-terminal region) with SHANK2 (via proline-rich region); the interaction is increased in a PKA-dependent manner. Isoform 33, isoform 4, isoform 7, isoform 8 and isoform 9 but not isoform 32 and isoform 6 interact with SHANK2. Isoform 31 interacts weakly with SHANK2. The cofactor is Zn(2+). Mg(2+) serves as cofactor. Requires Mn(2+) as cofactor. Isoform 1 and isoform 9 are rapidly activated by PKA through phosphorylation. Long isoforms that share a conserved PKA phosphorylation site in the N-terminus are also activated. In terms of processing, sumoylation of long isoforms by PIAS4 augments their activation by PKA phosphorylation and represses their inhibition by ERK phosphorylation. As to expression, expressed in epithelial cells. Isoform 33, isoform 4, isoform 5 and isoform 9 are expressed in brain. Isoform 33, isoform 5, isoform 8 and isoform 9 are expressed in heart (at protein level). Isoform 4 and isoform 6 are strongly expressed in cortex and cerebellum. Isoform 7 is strongly expressed in cortex and testis; weakly expressed in kidney, lung, spleen and cerebellum. Isoform 8 is strongly expressed in lung, heart and liver. Isoform 31, isoform 32, isoform 33, isoform 5 and isoform 9 are widely distributed.

The protein localises to the apical cell membrane. Its subcellular location is the cytoplasm. It localises to the membrane. The protein resides in the cytoskeleton. It is found in the microtubule organizing center. The protein localises to the centrosome. It catalyses the reaction 3',5'-cyclic AMP + H2O = AMP + H(+). Its pathway is purine metabolism; 3',5'-cyclic AMP degradation; AMP from 3',5'-cyclic AMP: step 1/1. With respect to regulation, activated by phosphatidic acid. Inhibited by rolipram. Hydrolyzes the second messenger cAMP, which is a key regulator of many important physiological processes. The chain is 3',5'-cyclic-AMP phosphodiesterase 4D (Pde4d) from Rattus norvegicus (Rat).